Consider the following 287-residue polypeptide: Oxaloacetate decarboxylase (287 aa).

Ser-50 is a binding site for substrate. Position 88 (Asp-88) interacts with Mg(2+). 2 residues coordinate substrate: Arg-159 and His-235.

The protein belongs to the isocitrate lyase family. Oxaloacetate decarboxylase subfamily. Homotetramer; dimer of dimers. It depends on Mg(2+) as a cofactor.

It carries out the reaction oxaloacetate + H(+) = pyruvate + CO2. In terms of biological role, catalyzes the decarboxylation of oxaloacetate into pyruvate. Seems to play a role in maintaining cellular concentrations of bicarbonate and pyruvate. This is Oxaloacetate decarboxylase from Pseudomonas aeruginosa (strain LESB58).